The sequence spans 124 residues: uncharacterized protein (124 aa).

An N-terminal signal peptide occupies residues 1 to 19 (MRLLVQKVILIYLARYAKS). A run of 2 helical transmembrane segments spans residues 37 to 57 (IAEF…GVKF) and 86 to 108 (LGAL…IIII).

The protein localises to the membrane. This is an uncharacterized protein from Saccharomyces cerevisiae (strain ATCC 204508 / S288c) (Baker's yeast).